A 102-amino-acid polypeptide reads, in one-letter code: NADH-quinone oxidoreductase subunit K (102 aa).

A run of 3 helical transmembrane segments spans residues 6 to 26 (LEHGLIVATILFALGFYGVMV), 30 to 50 (LLFMLMSLEIMMNAAALAFVL), and 62 to 82 (IMFILILTLAAAEACIGLAIV).

Belongs to the complex I subunit 4L family. As to quaternary structure, NDH-1 is composed of 14 different subunits. Subunits NuoA, H, J, K, L, M, N constitute the membrane sector of the complex.

The protein localises to the cell inner membrane. It catalyses the reaction a quinone + NADH + 5 H(+)(in) = a quinol + NAD(+) + 4 H(+)(out). Functionally, NDH-1 shuttles electrons from NADH, via FMN and iron-sulfur (Fe-S) centers, to quinones in the respiratory chain. The immediate electron acceptor for the enzyme in this species is believed to be ubiquinone. Couples the redox reaction to proton translocation (for every two electrons transferred, four hydrogen ions are translocated across the cytoplasmic membrane), and thus conserves the redox energy in a proton gradient. In Acinetobacter baylyi (strain ATCC 33305 / BD413 / ADP1), this protein is NADH-quinone oxidoreductase subunit K.